The sequence spans 161 residues: Regulator of ribonuclease activity A (161 aa).

Belongs to the RraA family. In terms of assembly, homotrimer. Binds to both RNA-binding sites in the C-terminal region of Rne and to RhlB.

Its subcellular location is the cytoplasm. Its function is as follows. Globally modulates RNA abundance by binding to RNase E (Rne) and regulating its endonucleolytic activity. Can modulate Rne action in a substrate-dependent manner by altering the composition of the degradosome. Modulates RNA-binding and helicase activities of the degradosome. This chain is Regulator of ribonuclease activity A, found in Citrobacter koseri (strain ATCC BAA-895 / CDC 4225-83 / SGSC4696).